We begin with the raw amino-acid sequence, 199 residues long: Holliday junction resolvase RecU (199 aa).

Mg(2+) contacts are provided by T82, D84, E97, and Q116.

This sequence belongs to the RecU family. The cofactor is Mg(2+).

It is found in the cytoplasm. The catalysed reaction is Endonucleolytic cleavage at a junction such as a reciprocal single-stranded crossover between two homologous DNA duplexes (Holliday junction).. Endonuclease that resolves Holliday junction intermediates in genetic recombination. Cleaves mobile four-strand junctions by introducing symmetrical nicks in paired strands. Promotes annealing of linear ssDNA with homologous dsDNA. Required for DNA repair, homologous recombination and chromosome segregation. This Streptococcus pyogenes serotype M1 protein is Holliday junction resolvase RecU.